The sequence spans 125 residues: Small ribosomal subunit protein uS12 (125 aa).

Position 89 is a 3-methylthioaspartic acid (Asp89). The segment at 104 to 125 (TAGVKDRSQSRSKYGAKASKQD) is disordered.

The protein belongs to the universal ribosomal protein uS12 family. As to quaternary structure, part of the 30S ribosomal subunit. Contacts proteins S8 and S17. May interact with IF1 in the 30S initiation complex.

With S4 and S5 plays an important role in translational accuracy. Its function is as follows. Interacts with and stabilizes bases of the 16S rRNA that are involved in tRNA selection in the A site and with the mRNA backbone. Located at the interface of the 30S and 50S subunits, it traverses the body of the 30S subunit contacting proteins on the other side and probably holding the rRNA structure together. The combined cluster of proteins S8, S12 and S17 appears to hold together the shoulder and platform of the 30S subunit. The polypeptide is Small ribosomal subunit protein uS12 (Prochlorococcus marinus (strain MIT 9303)).